The chain runs to 387 residues: Phosphoglycerate kinase (387 aa).

Substrate contacts are provided by residues Asp-21–Asn-23, Arg-36, His-59–Arg-62, Arg-113, and Arg-146. ATP contacts are provided by residues Lys-197, Glu-314, and Gly-340–Thr-343.

Belongs to the phosphoglycerate kinase family. As to quaternary structure, monomer.

The protein resides in the cytoplasm. The enzyme catalyses (2R)-3-phosphoglycerate + ATP = (2R)-3-phospho-glyceroyl phosphate + ADP. It functions in the pathway carbohydrate degradation; glycolysis; pyruvate from D-glyceraldehyde 3-phosphate: step 2/5. The chain is Phosphoglycerate kinase from Pseudomonas paraeruginosa (strain DSM 24068 / PA7) (Pseudomonas aeruginosa (strain PA7)).